We begin with the raw amino-acid sequence, 656 residues long: Solute carrier family 5 member 4A (656 aa).

At 1 to 28 the chain is on the cytoplasmic side; sequence MASTASVSTSTASSELSSLSNNINNAAD. A helical membrane pass occupies residues 29–47; the sequence is ISVIVIYFVVVMAVGVWAM. Residues 48-64 lie on the Extracellular side of the membrane; sequence LKTNRSTVGGFFLAGRS. A helical transmembrane segment spans residues 65 to 85; the sequence is MTWWPMGASLFASNIGSGHFV. Topologically, residues 86–105 are cytoplasmic; it reads GLAGTGAASGIAVTAFESHS. The helical transmembrane segment at 106 to 126 threads the bilayer; the sequence is FALLLVLGWIFVPIYIKAGVM. Residues 127–171 are Extracellular-facing; that stretch reads TMPEYLKKRFGGKRLQIYLSILFLFICVILTISADIFSGAIFIKL. A helical transmembrane segment spans residues 172–191; it reads ALGLNLYLAILILLAITAIF. Over 192–208 the chain is Cytoplasmic; it reads TITGGLASVIYTDTVQA. Residues 209–229 traverse the membrane as a helical segment; the sequence is VIMLVGSFILMVFAFVEVGGY. At 230–270 the chain is on the extracellular side; the sequence is ESFTEKFMNAIPSVVEGDNLTINSRCYTPQPDSFHIFRDPV. N248 is a glycosylation site (N-linked (GlcNAc...) asparagine). The chain crosses the membrane as a helical span at residues 271-291; that stretch reads TGDIPWPGTAFGMPITALWYW. The Cytoplasmic segment spans residues 292-314; that stretch reads CINQVIVQRCLCGKNLSHVKAAC. A helical membrane pass occupies residues 315–334; that stretch reads ILCGYLKLLPLFFMVMPGMI. Over 335–423 the chain is Extracellular; the sequence is SRILYTDMVA…RKKASERELL (89 aa). Residues 424 to 443 form a helical membrane-spanning segment; that stretch reads IAGRLFVSVLIVTSILWVPI. Residues 444–455 lie on the Cytoplasmic side of the membrane; sequence VEVSQGGQLVHY. A helical membrane pass occupies residues 456-476; it reads TEAISSYLGPPIAAVFLVAVF. Topologically, residues 477-526 are extracellular; that stretch reads CKRANEQGAFWGLMVGLVMGLIRMIAEFSYGTGSCLAPSSCPKIICGVHY. Residues 527-547 form a helical membrane-spanning segment; it reads LYFAIILFFVCILVILGVSYL. Residues 548 to 634 are Cytoplasmic-facing; that stretch reads TKPIPDVHLH…TDTTEKPFWR (87 aa). Residues 574 to 593 form a disordered region; it reads DAEDKEENGADDRTEEDQTE. Residues 635–655 traverse the membrane as a helical segment; it reads TVMNVNVILLLAVAAFFYGYF.

This sequence belongs to the sodium:solute symporter (SSF) (TC 2.A.21) family. Expressed in small intestine. Expressed in kidney.

It is found in the cell membrane. Not inhibited by phlorizin. Functionally, does not function as sodium/D-glucose symporter. Generates D-glucose-induced depolarization in a pH-dependent manner, with activity in acidic conditions (pH 5) but not neutral conditions. In Mus musculus (Mouse), this protein is Solute carrier family 5 member 4A.